The following is a 312-amino-acid chain: Protoheme IX farnesyltransferase (312 aa).

The next 8 membrane-spanning stretches (helical) occupy residues 33 to 53, 54 to 74, 105 to 125, 126 to 146, 154 to 174, 181 to 201, 243 to 263, and 291 to 311; these read VMLL…VSIN, PLYG…AGAL, FIFG…FVNW, FAAL…TIWL, IVIG…AATG, FLLF…LSLF, IIGF…IIFI, and FYLA…CFII.

This sequence belongs to the UbiA prenyltransferase family. Protoheme IX farnesyltransferase subfamily.

The protein resides in the cell inner membrane. The catalysed reaction is heme b + (2E,6E)-farnesyl diphosphate + H2O = Fe(II)-heme o + diphosphate. It functions in the pathway porphyrin-containing compound metabolism; heme O biosynthesis; heme O from protoheme: step 1/1. Its function is as follows. Converts heme B (protoheme IX) to heme O by substitution of the vinyl group on carbon 2 of heme B porphyrin ring with a hydroxyethyl farnesyl side group. This chain is Protoheme IX farnesyltransferase, found in Bartonella henselae (strain ATCC 49882 / DSM 28221 / CCUG 30454 / Houston 1) (Rochalimaea henselae).